A 210-amino-acid polypeptide reads, in one-letter code: Probable septum site-determining protein MinC (210 aa).

The protein belongs to the MinC family. Interacts with MinD and FtsZ.

Functionally, cell division inhibitor that blocks the formation of polar Z ring septums. Rapidly oscillates between the poles of the cell to destabilize FtsZ filaments that have formed before they mature into polar Z rings. Prevents FtsZ polymerization. The chain is Probable septum site-determining protein MinC from Thermotoga sp. (strain RQ2).